The sequence spans 591 residues: Isocitrate dehydrogenase kinase/phosphatase (591 aa).

ATP-binding positions include 322-328 (APGIRGL) and Lys-343. Asp-378 is a catalytic residue.

The protein belongs to the AceK family.

The protein localises to the cytoplasm. The catalysed reaction is L-seryl-[isocitrate dehydrogenase] + ATP = O-phospho-L-seryl-[isocitrate dehydrogenase] + ADP + H(+). Bifunctional enzyme which can phosphorylate or dephosphorylate isocitrate dehydrogenase (IDH) on a specific serine residue. This is a regulatory mechanism which enables bacteria to bypass the Krebs cycle via the glyoxylate shunt in response to the source of carbon. When bacteria are grown on glucose, IDH is fully active and unphosphorylated, but when grown on acetate or ethanol, the activity of IDH declines drastically concomitant with its phosphorylation. The protein is Isocitrate dehydrogenase kinase/phosphatase of Aromatoleum aromaticum (strain DSM 19018 / LMG 30748 / EbN1) (Azoarcus sp. (strain EbN1)).